Here is a 79-residue protein sequence, read N- to C-terminus: Large ribosomal subunit protein bL28 (79 aa).

The protein belongs to the bacterial ribosomal protein bL28 family.

In Christiangramia forsetii (strain DSM 17595 / CGMCC 1.15422 / KT0803) (Gramella forsetii), this protein is Large ribosomal subunit protein bL28.